The primary structure comprises 56 residues: Large ribosomal subunit protein bL33 (56 aa).

The protein belongs to the bacterial ribosomal protein bL33 family.

This chain is Large ribosomal subunit protein bL33, found in Acidovorax sp. (strain JS42).